Consider the following 414-residue polypeptide: MKQYKILLIIADGLGDRPVSKLNGLTPLEAANKPAISDLLKNSMIGLMDPISPGVIPGSDTSHLSIFGLDPHVYYRGRGAFEALGAGATLKHGDVAFRGNFATVNNDLVVVDRRAGRKLEEGEELVKELNEKIKEINDVKIRFYKGTEHRVAVVLSGKGISDKVSDTDPHYEGLKVLESKPLEDSTEALRTAEIINILTRKVFDVLNSSEVNKRRIEQGEKPANIVLLRGAAHYIKLPSFSSYTKLKAAAVSATALIKGICRELGMNVVTPVGATGGIDTDYNAKAKAAIELLKENDFVFLHIKATDAASHDGLVEEKVKAIERIDKVIGTIVDNVGRDNLILMFTGDHATPVEVKEHSGDPVPILLYVPYPIINDNVRDFNEKEARKGSLRIRGLDVTNILLNYSNRAEKYGA.

The protein belongs to the BPG-independent phosphoglycerate mutase family. A-PGAM subfamily.

It catalyses the reaction (2R)-2-phosphoglycerate = (2R)-3-phosphoglycerate. The protein operates within carbohydrate degradation; glycolysis; pyruvate from D-glyceraldehyde 3-phosphate: step 3/5. Its function is as follows. Catalyzes the interconversion of 2-phosphoglycerate and 3-phosphoglycerate. In Saccharolobus islandicus (strain L.S.2.15 / Lassen #1) (Sulfolobus islandicus), this protein is 2,3-bisphosphoglycerate-independent phosphoglycerate mutase.